A 137-amino-acid chain; its full sequence is Protein yippee-like F37A8.5 (137 aa).

The segment at 1 to 20 is disordered; that stretch reads MHFRMKVLENSSKHNTPKKQ. Positions 32–129 constitute a Yippee domain; it reads RCYSCIHCRA…IELAHMVKDN (98 aa). Residues Cys-36, Cys-39, Cys-92, and Cys-95 each coordinate Zn(2+).

It belongs to the yippee family.

This Caenorhabditis elegans protein is Protein yippee-like F37A8.5.